A 487-amino-acid chain; its full sequence is UDP-N-acetylmuramate--L-alanine ligase (487 aa).

129–135 (GTHGKTT) is an ATP binding site.

This sequence belongs to the MurCDEF family.

It localises to the cytoplasm. The catalysed reaction is UDP-N-acetyl-alpha-D-muramate + L-alanine + ATP = UDP-N-acetyl-alpha-D-muramoyl-L-alanine + ADP + phosphate + H(+). Its pathway is cell wall biogenesis; peptidoglycan biosynthesis. Cell wall formation. The sequence is that of UDP-N-acetylmuramate--L-alanine ligase from Aliivibrio salmonicida (strain LFI1238) (Vibrio salmonicida (strain LFI1238)).